The primary structure comprises 429 residues: Actin-like protein 6A (429 aa).

Position 2 is an N-acetylserine (serine 2). A Glycyl lysine isopeptide (Lys-Gly) (interchain with G-Cter in SUMO2) cross-link involves residue lysine 62. 2 positions are modified to phosphoserine: serine 86 and serine 233.

The protein belongs to the actin family. As to quaternary structure, component of numerous complexes with chromatin remodeling and histone acetyltransferase activity. Component of the NuA4 histone acetyltransferase complex which contains the catalytic subunit KAT5/TIP60 and the subunits EP400, TRRAP/PAF400, BRD8/SMAP, EPC1, DMAP1/DNMAP1, RUVBL1/TIP49, RUVBL2, ING3, actin, ACTL6A/BAF53A, MORF4L1/MRG15, MORF4L2/MRGX, MRGBP, YEATS4/GAS41, VPS72/YL1 and MEAF6. The NuA4 complex interacts with MYC and the adenovirus E1A protein. Component of a NuA4-related complex which contains EP400, TRRAP/PAF400, SRCAP, BRD8/SMAP, EPC1, DMAP1/DNMAP1, RUVBL1/TIP49, RUVBL2, actin, ACTL6A/BAF53A, VPS72 and YEATS4/GAS41. Component of the multiprotein chromatin-remodeling complexes SWI/SNF: SWI/SNF-A (BAF), SWI/SNF-B (PBAF) and related complexes. The canonical complex contains a catalytic subunit (either SMARCA4/BRG1/BAF190A or SMARCA2/BRM/BAF190B) and at least SMARCE1, ACTL6A/BAF53, SMARCC1/BAF155, SMARCC2/BAF170, and SMARCB1/SNF5/BAF47. Other subunits specific to each of the complexes may also be present permitting several possible combinations developmentally and tissue specific. Component of the BAF complex, which includes at least actin (ACTB), ARID1A/BAF250A, ARID1B/BAF250B, SMARCA2/BRM, SMARCA4/BRG1/BAF190A, ACTL6A/BAF53, ACTL6B/BAF53B, SMARCE1/BAF57, SMARCC1/BAF155, SMARCC2/BAF170, SMARCB1/SNF5/INI1, and one or more SMARCD1/BAF60A, SMARCD2/BAF60B, or SMARCD3/BAF60C. In muscle cells, the BAF complex also contains DPF3. Component of the BAF53 complex, at least composed of ACTL6A/BAF53A, RUVBL1/TIP49, SMARCA2/BRM/BAF190B and TRRAP/PAF400, and which may also include a HAT activity related to, but distinct from, that of KAT5. Component of neural progenitors-specific chromatin remodeling complex (npBAF complex) composed of at least, ARID1A/BAF250A or ARID1B/BAF250B, SMARCD1/BAF60A, SMARCD3/BAF60C, SMARCA2/BRM/BAF190B, SMARCA4/BRG1/BAF190A, SMARCB1/BAF47, SMARCC1/BAF155, SMARCE1/BAF57, SMARCC2/BAF170, PHF10/BAF45A, ACTL6A/BAF53A and actin. Component of SWI/SNF (GBAF) subcomplex, which includes at least BICRA or BICRAL (mutually exclusive), BRD9, SS18, SMARCA2/BRM, SMARCA4/BRG1/BAF190A, ACTL6A/BAF53, SMARCC1/BAF155, and SMARCD1/BAF60A. May be a component of the SWI/SNF-B (PBAF) chromatin remodeling complex, at least composed of SMARCA4/BRG1, SMARCB1/BAF47/SNF5, ACTL6A/BAF53A or ACTL6B/BAF53B, SMARCE1/BAF57, SMARCD1/BAF60A, SMARCD2/BAF60B, perhaps SMARCD3/BAF60C, SMARCC1/BAF155, SMARCC2/BAF170, PBRM1/BAF180, ARID2/BAF200 and actin. Interacts with SMARCA4/BRG1/BAF190A. Interacts with PHF10/BAF45A. Component of the chromatin remodeling INO80 complex; specifically part of a complex module associated with the DBINO domain of INO80. Interacts with DPF2. In terms of tissue distribution, widely expressed. Expressed selectively in neural stem and progenitor cells (at protein level).

The protein resides in the nucleus. Functionally, involved in transcriptional activation and repression of select genes by chromatin remodeling (alteration of DNA-nucleosome topology). Component of SWI/SNF chromatin remodeling complexes that carry out key enzymatic activities, changing chromatin structure by altering DNA-histone contacts within a nucleosome in an ATP-dependent manner. Required for maximal ATPase activity of SMARCA4/BRG1/BAF190A and for association of the SMARCA4/BRG1/BAF190A containing remodeling complex BAF with chromatin/nuclear matrix. Belongs to the neural progenitors-specific chromatin remodeling complex (npBAF complex) and is required for the proliferation of neural progenitors. During neural development a switch from a stem/progenitor to a postmitotic chromatin remodeling mechanism occurs as neurons exit the cell cycle and become committed to their adult state. The transition from proliferating neural stem/progenitor cells to postmitotic neurons requires a switch in subunit composition of the npBAF and nBAF complexes. As neural progenitors exit mitosis and differentiate into neurons, npBAF complexes which contain ACTL6A/BAF53A and PHF10/BAF45A, are exchanged for homologous alternative ACTL6B/BAF53B and DPF1/BAF45B or DPF3/BAF45C subunits in neuron-specific complexes (nBAF). The npBAF complex is essential for the self-renewal/proliferative capacity of the multipotent neural stem cells. The nBAF complex along with CREST plays a role regulating the activity of genes essential for dendrite growth. Component of the NuA4 histone acetyltransferase (HAT) complex which is involved in transcriptional activation of select genes principally by acetylation of nucleosomal histones H4 and H2A. This modification may both alter nucleosome - DNA interactions and promote interaction of the modified histones with other proteins which positively regulate transcription. This complex may be required for the activation of transcriptional programs associated with oncogene and proto-oncogene mediated growth induction, tumor suppressor mediated growth arrest and replicative senescence, apoptosis, and DNA repair. NuA4 may also play a direct role in DNA repair when recruited to sites of DNA damage. Putative core component of the chromatin remodeling INO80 complex which is involved in transcriptional regulation, DNA replication and probably DNA repair. The polypeptide is Actin-like protein 6A (Actl6a) (Mus musculus (Mouse)).